The chain runs to 293 residues: ELMO domain-containing protein 2 (293 aa).

An ELMO domain is found at 126–282; sequence QHEKMLLKLW…KFHERIKGLL (157 aa).

Functionally, acts as a GTPase-activating protein (GAP) toward guanine nucleotide exchange factors like ARL2, ARL3, ARF1 and ARF6, but not for GTPases outside the Arf family. The sequence is that of ELMO domain-containing protein 2 (Elmod2) from Mus musculus (Mouse).